A 283-amino-acid polypeptide reads, in one-letter code: MEITEKAPAKLNLFLDTPFNHPDGLPEWNMIMTSVDLADYVKIESIPGKMGIKVRTNTGFLPNDSRNLAYQAARILQEKYHVRAKVIIEIRKHIPVAAGLGGGSSDAAAVLRGLNKLWNLELSLEVLAKIGLEIDSDVPFCVYSRTAHVLGKGEKVIPLKKLPPMWVVIAKPKLSVSTPYILSKIEHKELQHSNIESILDAIEREDYTDICRYMGNVLEQVTGKEHPEVLKIKNRIKQYGADAAQMSGTGPTVFGVASKSSRAKHIVNSLKGFCHEVYLVRIL.

Lysine 10 is an active-site residue. 95–105 (PVAAGLGGGSS) is an ATP binding site. The active site involves aspartate 137.

Belongs to the GHMP kinase family. IspE subfamily.

The enzyme catalyses 4-CDP-2-C-methyl-D-erythritol + ATP = 4-CDP-2-C-methyl-D-erythritol 2-phosphate + ADP + H(+). It functions in the pathway isoprenoid biosynthesis; isopentenyl diphosphate biosynthesis via DXP pathway; isopentenyl diphosphate from 1-deoxy-D-xylulose 5-phosphate: step 3/6. Functionally, catalyzes the phosphorylation of the position 2 hydroxy group of 4-diphosphocytidyl-2C-methyl-D-erythritol. This Pediococcus pentosaceus (strain ATCC 25745 / CCUG 21536 / LMG 10740 / 183-1w) protein is 4-diphosphocytidyl-2-C-methyl-D-erythritol kinase.